The primary structure comprises 931 residues: Bifunctional uridylyltransferase/uridylyl-removing enzyme (931 aa).

A uridylyltransferase region spans residues 1–383; sequence MDLATTNDAA…RPGTELRRVP (383 aa). Residues 384-739 are uridylyl-removing; the sequence is EGDDFIIDNN…VGFDEARGVT (356 aa). Positions 499-622 constitute an HD domain; the sequence is VDEHLLRCIG…VQSVEQMKLL (124 aa). ACT domains are found at residues 740–822 and 851–931; these read ELTI…VVAR and VIEV…QSVG.

Belongs to the GlnD family. It depends on Mg(2+) as a cofactor.

It carries out the reaction [protein-PII]-L-tyrosine + UTP = [protein-PII]-uridylyl-L-tyrosine + diphosphate. The enzyme catalyses [protein-PII]-uridylyl-L-tyrosine + H2O = [protein-PII]-L-tyrosine + UMP + H(+). With respect to regulation, uridylyltransferase (UTase) activity is inhibited by glutamine, while glutamine activates uridylyl-removing (UR) activity. In terms of biological role, modifies, by uridylylation and deuridylylation, the PII regulatory proteins (GlnB and homologs), in response to the nitrogen status of the cell that GlnD senses through the glutamine level. Under low glutamine levels, catalyzes the conversion of the PII proteins and UTP to PII-UMP and PPi, while under higher glutamine levels, GlnD hydrolyzes PII-UMP to PII and UMP (deuridylylation). Thus, controls uridylylation state and activity of the PII proteins, and plays an important role in the regulation of nitrogen assimilation and metabolism. The sequence is that of Bifunctional uridylyltransferase/uridylyl-removing enzyme from Nitrobacter hamburgensis (strain DSM 10229 / NCIMB 13809 / X14).